The sequence spans 187 residues: Large ribosomal subunit protein uL6 (187 aa).

Belongs to the universal ribosomal protein uL6 family. In terms of assembly, part of the 50S ribosomal subunit.

Functionally, this protein binds to the 23S rRNA, and is important in its secondary structure. It is located near the subunit interface in the base of the L7/L12 stalk, and near the tRNA binding site of the peptidyltransferase center. The chain is Large ribosomal subunit protein uL6 from Thermosynechococcus vestitus (strain NIES-2133 / IAM M-273 / BP-1).